The primary structure comprises 227 residues: 7-cyano-7-deazaguanine synthase (227 aa).

Residue 9-19 participates in ATP binding; sequence LSGGLDSATVL. Positions 189, 199, 202, and 205 each coordinate Zn(2+).

The protein belongs to the QueC family. Zn(2+) is required as a cofactor.

It catalyses the reaction 7-carboxy-7-deazaguanine + NH4(+) + ATP = 7-cyano-7-deazaguanine + ADP + phosphate + H2O + H(+). Its pathway is purine metabolism; 7-cyano-7-deazaguanine biosynthesis. Catalyzes the ATP-dependent conversion of 7-carboxy-7-deazaguanine (CDG) to 7-cyano-7-deazaguanine (preQ(0)). This Cupriavidus taiwanensis (strain DSM 17343 / BCRC 17206 / CCUG 44338 / CIP 107171 / LMG 19424 / R1) (Ralstonia taiwanensis (strain LMG 19424)) protein is 7-cyano-7-deazaguanine synthase.